Reading from the N-terminus, the 101-residue chain is Large ribosomal subunit protein bL28 (101 aa).

It belongs to the bacterial ribosomal protein bL28 family.

This is Large ribosomal subunit protein bL28 from Rhodopseudomonas palustris (strain BisA53).